The primary structure comprises 377 residues: Exopolygalacturonase (377 aa).

The first 5 residues, 1–5 (RGVQS), serve as a signal peptide directing secretion. 5 PbH1 repeats span residues 159–184 (CEDITFQHVTVTAPGTSINTDGIHVG), 186–207 (SKGVTITNTKIATGDDCISIGP), 209–229 (SQNVTITQVNCGPGHGISIGS), 239–260 (VRGITVKGCTFSGTMNGVRVKT), and 269–290 (ATDLTFQDLTMNNVQNPVILDQ). Catalysis depends on D200, which acts as the Proton donor. N211 carries N-linked (GlcNAc...) asparagine glycosylation. H223 is an active-site residue. N-linked (GlcNAc...) asparagine glycosylation is present at N345.

It belongs to the glycosyl hydrolase 28 family. Monomer. In terms of processing, glycosylated. Expressed in pollen (at protein level). Expressed in stem, but not in leaves (at protein level).

It localises to the secreted. The protein resides in the cell wall. It is found in the golgi apparatus. Its subcellular location is the endoplasmic reticulum. The protein localises to the vesicle. It carries out the reaction [(1-&gt;4)-alpha-D-galacturonosyl](n) + H2O = alpha-D-galacturonate + [(1-&gt;4)-alpha-D-galacturonosyl](n-1). May function in depolymerizing pectin during pollen development, germination, and tube growth. Acts as an exo-polygalacturonase. The chain is Exopolygalacturonase from Platanus acerifolia (London plane tree).